Reading from the N-terminus, the 468-residue chain is UDP-N-acetylmuramoyl-L-alanine--L-glutamate ligase (468 aa).

ATP is bound at residue 122-128; the sequence is GTKGKST.

The protein belongs to the MurCDEF family. MurD2 subfamily.

The protein localises to the cytoplasm. The catalysed reaction is UDP-N-acetyl-alpha-D-muramoyl-L-alanine + L-glutamate + ATP = UDP-N-acetyl-alpha-D-muramoyl-L-alanyl-L-glutamate + ADP + phosphate + H(+). Its pathway is cell wall biogenesis; peptidoglycan biosynthesis. Cell wall formation. Catalyzes the addition of L-glutamate to the nucleotide precursor UDP-N-acetylmuramoyl-L-alanine. This is UDP-N-acetylmuramoyl-L-alanine--L-glutamate ligase from Xylella fastidiosa (strain Temecula1 / ATCC 700964).